A 5098-amino-acid polypeptide reads, in one-letter code: Auxin transport protein BIG (5098 aa).

The residue at position 2 (A2) is an N-acetylalanine. 2 helical membrane-spanning segments follow: residues A1150–L1170 and L1458–L1478. Residues S1539 to S1549 are compositionally biased toward acidic residues. Residues S1539–E1562 form a disordered region. Residues K1573–P1644 form a UBR-type zinc finger. The ZZ-type zinc finger occupies S2613–E2672. Zn(2+)-binding residues include C2618, C2621, C2633, C2636, C2642, C2645, H2658, and H2662. A helical membrane pass occupies residues S2813–W2833. Residues E3149–H3174 form a disordered region. Polar residues predominate over residues V3151–V3162. An MYND-type; degenerate zinc finger spans residues C3464–C3504. Coiled coils occupy residues K3537–L3557 and L4313–E4333. Positions P4569 to D5098 are UBR4 E3 catalytic module. The segment at G4698–A4817 adopts a HemiRING-type zinc-finger fold. Residues C4701, C4704, H4751, and C4754 each coordinate Zn(2+). The UZI domain maps to S4820–D5098. The span at S4891–S4903 shows a compositional bias: low complexity. The disordered stretch occupies residues S4891–T4915.

Belongs to the UBR4 family. In terms of tissue distribution, constitutively expressed in roots, rosette leaves, inflorescence stems, and flowers. Present in inflorescence meristems, floral meristems and vascular tissues.

The protein resides in the membrane. Its function is as follows. Required for auxin efflux and polar auxin transport (PAT) influencing auxin-mediated developmental responses (e.g. cell elongation, apical dominance, lateral root production, inflorescence architecture, general growth and development). Controls the elongation of the pedicels and stem internodes through auxin action. Involved in the expression modulation of light-regulated genes. Represses CAB1 and CAB3 genes expression in etiolated seedlings. Confers sensitivity to the auxin transport inhibitors N-1-naphthylphthalamic acid (NPA), 2-carboxyphenyl-3-phenylpropane-l,2-dione (CPD), and methyl-2-chloro-9-hydroxyfluorene-9-carboxylate (CFM). Influences the polarized subcellular distribution of the auxin transporter PIN1 in response to auxin transport inhibitors. Plays a role in the regulation of responses to phytohormones such as auxin, cytokinins, ethylene and gibberellic acid (GA), particularly during light-mediated stimuli (e.g. shade ovoidance, etiolation). Required for pericycle cell activation to form lateral root primordia (LRP) in both high and low phosphate P conditions. Necessary for the plant-growth promotion and lateral root development mediated by the fungus Trichoderma virens. The chain is Auxin transport protein BIG (BIG) from Arabidopsis thaliana (Mouse-ear cress).